A 777-amino-acid chain; its full sequence is Histone-lysine N-methyltransferase set9 (777 aa).

The 115-residue stretch at Cys-117 to Ser-231 folds into the SET domain. Disordered regions lie at residues Ala-263–Pro-414 and Arg-682–Tyr-718. Over residues Thr-291 to Val-301 the composition is skewed to polar residues. A compositionally biased stretch (low complexity) spans Thr-323–Gly-337. 2 stretches are compositionally biased toward polar residues: residues Thr-371–Glu-405 and Lys-688–Gly-698.

It belongs to the class V-like SAM-binding methyltransferase superfamily. Histone-lysine methyltransferase family. Suvar4-20 subfamily.

It localises to the nucleus. The protein resides in the chromosome. The catalysed reaction is L-lysyl(20)-[histone H4] + 3 S-adenosyl-L-methionine = N(6),N(6),N(6)-trimethyl-L-lysyl(20)-[histone H4] + 3 S-adenosyl-L-homocysteine + 3 H(+). In terms of biological role, histone methyltransferase that trimethylates 'Lys-20' of histone H4 to form H4K20me3. This Neurospora crassa (strain ATCC 24698 / 74-OR23-1A / CBS 708.71 / DSM 1257 / FGSC 987) protein is Histone-lysine N-methyltransferase set9 (hlm-1).